A 142-amino-acid chain; its full sequence is Large ribosomal subunit protein uL13 (142 aa).

The protein belongs to the universal ribosomal protein uL13 family. As to quaternary structure, part of the 50S ribosomal subunit.

Its function is as follows. This protein is one of the early assembly proteins of the 50S ribosomal subunit, although it is not seen to bind rRNA by itself. It is important during the early stages of 50S assembly. The sequence is that of Large ribosomal subunit protein uL13 from Koribacter versatilis (strain Ellin345).